A 27-amino-acid chain; its full sequence is AnmTX Sco 9a-1 (27 aa).

The residue at position 6 (P6) is a Hydroxyproline. Intrachain disulfides connect C7/C18 and C10/C25.

In terms of biological role, has analgesic and anti-inflammatory activity in vivo. At a dose of 0.1 and 1 mg/kg, exhibits anti-inflammatory activity by reducing the volume of edema during 24 h better than the nonsteroidal anti-inflammatory drug, Diclofenac, at dose of 1 mg/kg in a mouse model of acute local lambda-carrageenan-induced inflammation. At a dose of 1 mg/kg, reduces the content of tumor necrosis factor-alpha (TNF-alpha). Demonstrates a significant analgesic effect on acute pain sensitivity in the carrageenan-induced thermal hyperalgesia model at doses of 0.1 and 1 mg/kg. Not toxic in mice, however stimulates exploratory motivation and active search behavior, and demonstrates an anti-anxiety effect. Does not exhibit any effect on currents of rat acid-sensing ion channels ASIC1a or ASIC3. The polypeptide is AnmTX Sco 9a-1 (Stomphia coccinea (Spotted swimming anemone)).